Here is an 865-residue protein sequence, read N- to C-terminus: ABC transporter ATP-binding/permease protein Rv1747 (865 aa).

An FHA 1 domain is found at 29-78 (VVVGRDLRADVRVAHPLISRAHLLLRFDQGRWVAIDNGSLNGLYLNNRRV). The disordered stretch occupies residues 104–205 (GRHRGSAGRP…PAGARGGTEA (102 aa)). Residues 135–156 (PQTGTLGSGQLQQLPPATTRIP) show a composition bias toward low complexity. Position 152 is a phosphothreonine (threonine 152). Residues 157–166 (AAPPSGPQPR) are compositionally biased toward pro residues. Threonine 210 carries the phosphothreonine modification. Residues 230-279 (VRIGRANDNDIVIPEVLASRHHATLVPTPGGTEIRDNRSINGTFVNGARV) form the FHA 2 domain. Residues 319–552 (LDVRGVTWTI…VMGTTNWADI (234 aa)) form the ABC transporter domain. 352–359 (GPSGAGKS) lines the ATP pocket. One can recognise an ABC transmembrane type-2 domain in the interval 596-810 (RQFSTIARRQ…TPARWGFAAS (215 aa)). 6 helical membrane passes run 614-634 (GYFV…MSVP), 652-672 (PGQI…ALTI), 700-720 (VCVY…IVLV), 740-760 (FVDV…LSAI), 767-787 (IMPL…GMIP), and 836-856 (SAWW…VGFV).

This sequence in the central section; belongs to the ABC transporter superfamily. In the C-terminal section; belongs to the ABC-2 integral membrane protein family. As to quaternary structure, homodimer. Interacts with PknF. Post-translationally, phosphorylated by PknF. Can probably be phosphorylated in vivo by other kinases when PknF is missing.

It localises to the cell membrane. With respect to regulation, function is positively regulated by phosphorylation. Its function is as follows. Involved in the translocation of an unknown substrate across the membrane. Transmembrane domains (TMD) form a pore in the membrane and the ATP-binding domain (NBD) is responsible for energy generation. Required for virulence. The polypeptide is ABC transporter ATP-binding/permease protein Rv1747 (Mycobacterium tuberculosis (strain ATCC 25618 / H37Rv)).